Reading from the N-terminus, the 29-residue chain is Protein Tat (29 aa).

The interval 1–29 (PSSQPRGDPTGQEEPKKKVEKKTTTDPFD) is disordered. The Cell attachment site signature appears at 6–8 (RGD). A compositionally biased stretch (basic and acidic residues) spans 13 to 29 (EEPKKKVEKKTTTDPFD).

It belongs to the lentiviruses Tat family. As to quaternary structure, interacts with host CCNT1. Associates with the P-TEFb complex composed at least of Tat, P-TEFb (CDK9 and CCNT1), TAR RNA, RNA Pol II. Recruits the HATs CREBBP, TAF1/TFIID, EP300, PCAF and GCN5L2. Interacts with host KAT5/Tip60; this interaction targets the latter to degradation. Interacts with the host deacetylase SIRT1. Interacts with host capping enzyme RNGTT; this interaction stimulates RNGTT. Binds to host KDR, and to the host integrins ITGAV/ITGB3 and ITGA5/ITGB1. Interacts with host KPNB1/importin beta-1 without previous binding to KPNA1/importin alpha-1. Interacts with EIF2AK2. Interacts with host nucleosome assembly protein NAP1L1; this interaction may be required for the transport of Tat within the nucleus, since the two proteins interact at the nuclear rim. Interacts with host C1QBP/SF2P32; this interaction involves lysine-acetylated Tat. Interacts with the host chemokine receptors CCR2, CCR3 and CXCR4. Interacts with host DPP4/CD26; this interaction may trigger an anti-proliferative effect. Interacts with host LDLR. Interacts with the host extracellular matrix metalloproteinase MMP1. Interacts with host PRMT6; this interaction mediates Tat's methylation. Interacts with, and is ubiquitinated by MDM2/Hdm2. Interacts with host PSMC3 and HTATIP2. Interacts with STAB1; this interaction may overcome SATB1-mediated repression of IL2 and IL2RA (interleukin) in T cells by binding to the same domain than HDAC1. Interacts (when acetylated) with human CDK13, thereby increasing HIV-1 mRNA splicing and promoting the production of the doubly spliced HIV-1 protein Nef. In terms of processing, acetylation by EP300, CREBBP, GCN5L2/GCN5 and PCAF regulates the transactivation activity of Tat. Phosphorylated by EIF2AK2 on serine and threonine residues adjacent to the basic region important for TAR RNA binding and function. Phosphorylation of Tat by EIF2AK2 is dependent on the prior activation of EIF2AK2 by dsRNA. Post-translationally, asymmetrical arginine methylation by host PRMT6 seems to diminish the transactivation capacity of Tat and affects the interaction with host CCNT1. In terms of processing, polyubiquitination by MDM2 does not target Tat to degradation, but activates its transactivation function and fosters interaction with CCNT1 and TAR RNA.

It is found in the host nucleus. The protein localises to the host nucleolus. The protein resides in the host cytoplasm. It localises to the secreted. In terms of biological role, transcriptional activator that increases RNA Pol II processivity, thereby increasing the level of full-length viral transcripts. Recognizes a hairpin structure at the 5'-LTR of the nascent viral mRNAs referred to as the transactivation responsive RNA element (TAR) and recruits the cyclin T1-CDK9 complex (P-TEFb complex) that will in turn hyperphosphorylate the RNA polymerase II to allow efficient elongation. The CDK9 component of P-TEFb and other Tat-activated kinases hyperphosphorylate the C-terminus of RNA Pol II that becomes stabilized and much more processive. Other factors such as HTATSF1/Tat-SF1, SUPT5H/SPT5, and HTATIP2 are also important for Tat's function. Besides its effect on RNA Pol II processivity, Tat induces chromatin remodeling of proviral genes by recruiting the histone acetyltransferases (HATs) CREBBP, EP300 and PCAF to the chromatin. This also contributes to the increase in proviral transcription rate, especially when the provirus integrates in transcriptionally silent region of the host genome. To ensure maximal activation of the LTR, Tat mediates nuclear translocation of NF-kappa-B by interacting with host RELA. Through its interaction with host TBP, Tat may also modulate transcription initiation. Tat can reactivate a latently infected cell by penetrating in it and transactivating its LTR promoter. In the cytoplasm, Tat is thought to act as a translational activator of HIV-1 mRNAs. Functionally, extracellular circulating Tat can be endocytosed by surrounding uninfected cells via the binding to several surface receptors such as CD26, CXCR4, heparan sulfate proteoglycans (HSPG) or LDLR. Neurons are rarely infected, but they internalize Tat via their LDLR. Endosomal low pH allows Tat to cross the endosome membrane to enter the cytosol and eventually further translocate into the nucleus, thereby inducing severe cell dysfunctions ranging from cell activation to cell death. Through its interaction with nuclear HATs, Tat is potentially able to control the acetylation-dependent cellular gene expression. Tat seems to inhibit the HAT activity of KAT5/Tip60 and TAF1, and consequently modify the expression of specific cellular genes. Modulates the expression of many cellular genes involved in cell survival, proliferation or in coding for cytokines (such as IL10) or cytokine receptors. May be involved in the derepression of host interleukin IL2 expression. Mediates the activation of cyclin-dependent kinases and dysregulation of microtubule network. Tat plays a role in T-cell and neurons apoptosis. Tat induced neurotoxicity and apoptosis probably contribute to neuroAIDS. Host extracellular matrix metalloproteinase MMP1 cleaves Tat and decreases Tat's mediated neurotoxicity. Circulating Tat also acts as a chemokine-like and/or growth factor-like molecule that binds to specific receptors on the surface of the cells, affecting many cellular pathways. In the vascular system, Tat binds to ITGAV/ITGB3 and ITGA5/ITGB1 integrins dimers at the surface of endothelial cells and competes with bFGF for heparin-binding sites, leading to an excess of soluble bFGF. Binds to KDR/VEGFR-2. All these Tat-mediated effects enhance angiogenesis in Kaposi's sarcoma lesions. In Homo sapiens (Human), this protein is Protein Tat.